The primary structure comprises 57 residues: Large ribosomal subunit protein bL32 (57 aa).

The protein belongs to the bacterial ribosomal protein bL32 family.

The polypeptide is Large ribosomal subunit protein bL32 (Staphylococcus epidermidis (strain ATCC 35984 / DSM 28319 / BCRC 17069 / CCUG 31568 / BM 3577 / RP62A)).